The following is a 561-amino-acid chain: MADHNPDSDSTPRTLLRRVLDTADPRTPRRPRSARAGARRALLETASPRKLSGQTRTIARGRSHGARSVGRSAHIQASGHLEEQTPRTLLKNILLTAPESSILMPESVVKPVPAPQAVQPSRQESSCGSLELQLPELEPPTTLAPGLLAPGRRKQRLRLSVFQQGVDQGLSLSQEPQGNADASSLTRSLNLTFATPLQPQSVQRPGLARRPPARRAVDVGAFLRDLRDTSLAPPNIVLEDTQPFSQPMVGSPNVYHSLPCTPHTGAEDAEQAAGRKTQSSGPGLQKNSPGKPAQFLAGEAEEVNAFALGFLSTSSGVSGEDEVEPLHDGVEEAEKKMEEEGVSVSEMEATGAQGPSRVEEAEGHTEVTEAEGSQGTAEADGPGASSGDEDASGRAASPESASSTPESLQARRHHQFLEPAPAPGAAVLSSEPAEPLLVRHPPRPRTTGPRPRQDPHKAGLSHYVKLFSFYAKMPMERKALEMVEKCLDKYFQHLCDDLEVFAAHAGRKTVKPEDLELLMRRQGLVTDQVSLHVLVERHLPLEYRQLLIPCAYSGNSVFPAQ.

The tract at residues 1 to 83 (MADHNPDSDS…HIQASGHLEE (83 aa)) is disordered. Basic and acidic residues predominate over residues 18 to 27 (RVLDTADPRT). The span at 34–46 (ARAGARRALLETA) shows a compositional bias: low complexity. Residue S47 is modified to Phosphoserine. The residue at position 85 (T85) is a Phosphothreonine. The flexible stalk domain stretch occupies residues 93-421 (ILLTAPESSI…RHHQFLEPAP (329 aa)). Disordered stretches follow at residues 256-292 (HSLP…PGKP) and 333-457 (AEKK…DPHK). Residues 276-288 (KTQSSGPGLQKNS) are compositionally biased toward polar residues. 3 positions are modified to phosphoserine: S343, S345, and S356. Residues 357 to 367 (RVEEAEGHTEV) are compositionally biased toward basic and acidic residues. Phosphoserine occurs at positions 373, 385, 386, and 397. Residues 395-407 (AASPESASSTPES) show a composition bias toward low complexity.

It belongs to the CENP-T/CNN1 family. In terms of assembly, component of the CENPA-CAD complex, composed of CENPI, CENPK, CENPL, CENPO, CENPP, CENPQ, CENPR and CENPS. The CENPA-CAD complex is probably recruited on centromeres by the CENPA-NAC complex, at least composed of CENPA, CENPC, CENPH, CENPM, CENPN, CENPT and CENPU. Identified in a centromeric complex containing histones H2A, H2B, H3 and H4, and at least CENPA, CENPB, CENPC, CENPT, CENPN, HJURP, SUPT16H, SSRP1 and RSF1. Interacts (via N-terminus) with the NDC80 complex. Heterodimer with CENPW; this dimer coassembles with CENPS-CENPX heterodimers at centromeres to form the tetrameric CENP-T-W-S-X complex. Dynamically phosphorylated at Ser-47 and probably also other sites during the cell cycle. Phosphorylated at Ser-47 during G2 phase, metaphase and anaphase, but not during telophase or G1 phase.

It localises to the nucleus. It is found in the chromosome. The protein localises to the centromere. The protein resides in the kinetochore. Component of the CENPA-NAC (nucleosome-associated) complex, a complex that plays a central role in assembly of kinetochore proteins, mitotic progression and chromosome segregation. The CENPA-NAC complex recruits the CENPA-CAD (nucleosome distal) complex and may be involved in incorporation of newly synthesized CENPA into centromeres. Part of a nucleosome-associated complex that binds specifically to histone H3-containing nucleosomes at the centromere, as opposed to nucleosomes containing CENPA. Component of the heterotetrameric CENP-T-W-S-X complex that binds and supercoils DNA, and plays an important role in kinetochore assembly. CENPT has a fundamental role in kinetochore assembly and function. It is one of the inner kinetochore proteins, with most further proteins binding downstream. Required for normal chromosome organization and normal progress through mitosis. In Homo sapiens (Human), this protein is Centromere protein T (CENPT).